We begin with the raw amino-acid sequence, 492 residues long: Membrane-bound lytic murein transglycosylase F (492 aa).

The N-terminal stretch at 1–18 is a signal peptide; it reads MKGLFLRIIAIVALLLWA. The interval 19-268 is non-LT domain; the sequence is IDMVFPWQQI…RIEEKYFNHL (250 aa). Residues 270 to 492 form an LT domain region; sequence QFDYVDTRSY…DTLATTVTTQ (223 aa). Glu313 is an active-site residue.

It in the N-terminal section; belongs to the bacterial solute-binding protein 3 family. In the C-terminal section; belongs to the transglycosylase Slt family.

The protein resides in the cell outer membrane. It carries out the reaction Exolytic cleavage of the (1-&gt;4)-beta-glycosidic linkage between N-acetylmuramic acid (MurNAc) and N-acetylglucosamine (GlcNAc) residues in peptidoglycan, from either the reducing or the non-reducing ends of the peptidoglycan chains, with concomitant formation of a 1,6-anhydrobond in the MurNAc residue.. Functionally, murein-degrading enzyme that degrades murein glycan strands and insoluble, high-molecular weight murein sacculi, with the concomitant formation of a 1,6-anhydromuramoyl product. Lytic transglycosylases (LTs) play an integral role in the metabolism of the peptidoglycan (PG) sacculus. Their lytic action creates space within the PG sacculus to allow for its expansion as well as for the insertion of various structures such as secretion systems and flagella. The sequence is that of Membrane-bound lytic murein transglycosylase F from Pasteurella multocida (strain Pm70).